The chain runs to 118 residues: Myotrophin (118 aa).

3 ANK repeats span residues 1 to 30 (MGDKEFVWAIKNGDLDAVKEFVLGGEDVNR), 34 to 65 (GGRKPMHYAADCGQDEVLEFLLSKGANINAAD), and 67 to 98 (HGITPLLSACYEGHRKCVELLLSKGADKTVKG).

It belongs to the myotrophin family.

It localises to the cytoplasm. The protein resides in the nucleus. Its subcellular location is the perinuclear region. Regulates NF-kappa-B transcription factor activity. Promotes growth of cardiomyocytes, but not cardiomyocyte proliferation. Promotes cardiac muscle hypertrophy. Plays a role in the regulation of the growth of actin filaments. Inhibits the activity of the F-actin-capping protein complex. The polypeptide is Myotrophin (mtpn) (Xenopus tropicalis (Western clawed frog)).